Here is a 150-residue protein sequence, read N- to C-terminus: Large ribosomal subunit protein bL9 (150 aa).

Belongs to the bacterial ribosomal protein bL9 family.

Functionally, binds to the 23S rRNA. The chain is Large ribosomal subunit protein bL9 from Alcanivorax borkumensis (strain ATCC 700651 / DSM 11573 / NCIMB 13689 / SK2).